A 95-amino-acid polypeptide reads, in one-letter code: Aspartyl/glutamyl-tRNA(Asn/Gln) amidotransferase subunit C (95 aa).

This sequence belongs to the GatC family. In terms of assembly, heterotrimer of A, B and C subunits.

It catalyses the reaction L-glutamyl-tRNA(Gln) + L-glutamine + ATP + H2O = L-glutaminyl-tRNA(Gln) + L-glutamate + ADP + phosphate + H(+). It carries out the reaction L-aspartyl-tRNA(Asn) + L-glutamine + ATP + H2O = L-asparaginyl-tRNA(Asn) + L-glutamate + ADP + phosphate + 2 H(+). Functionally, allows the formation of correctly charged Asn-tRNA(Asn) or Gln-tRNA(Gln) through the transamidation of misacylated Asp-tRNA(Asn) or Glu-tRNA(Gln) in organisms which lack either or both of asparaginyl-tRNA or glutaminyl-tRNA synthetases. The reaction takes place in the presence of glutamine and ATP through an activated phospho-Asp-tRNA(Asn) or phospho-Glu-tRNA(Gln). This chain is Aspartyl/glutamyl-tRNA(Asn/Gln) amidotransferase subunit C, found in Chelativorans sp. (strain BNC1).